A 96-amino-acid polypeptide reads, in one-letter code: Co-chaperonin GroES (96 aa).

Belongs to the GroES chaperonin family. In terms of assembly, heptamer of 7 subunits arranged in a ring. Interacts with the chaperonin GroEL.

Its subcellular location is the cytoplasm. Its function is as follows. Together with the chaperonin GroEL, plays an essential role in assisting protein folding. The GroEL-GroES system forms a nano-cage that allows encapsulation of the non-native substrate proteins and provides a physical environment optimized to promote and accelerate protein folding. GroES binds to the apical surface of the GroEL ring, thereby capping the opening of the GroEL channel. The chain is Co-chaperonin GroES from Shewanella loihica (strain ATCC BAA-1088 / PV-4).